Here is a 255-residue protein sequence, read N- to C-terminus: 5'-nucleotidase SurE (255 aa).

The a divalent metal cation site is built by Asp8, Asp9, Ser40, and Asn95.

The protein belongs to the SurE nucleotidase family. A divalent metal cation serves as cofactor.

Its subcellular location is the cytoplasm. The catalysed reaction is a ribonucleoside 5'-phosphate + H2O = a ribonucleoside + phosphate. Its function is as follows. Nucleotidase that shows phosphatase activity on nucleoside 5'-monophosphates. The chain is 5'-nucleotidase SurE from Solidesulfovibrio magneticus (strain ATCC 700980 / DSM 13731 / RS-1) (Desulfovibrio magneticus).